The primary structure comprises 447 residues: Trimethylamine monooxygenase (447 aa).

Residues serine 13, glutamate 38, glutamine 40, leucine 46, tryptophan 47, and histidine 63 each contribute to the FAD site. NADP(+) is bound by residues tryptophan 71 and asparagine 73. 2 residues coordinate FAD: asparagine 73 and valine 126. Residues tyrosine 173, alanine 205, serine 206, serine 208, and arginine 229 each coordinate NADP(+). The FAD site is built by glutamine 318 and threonine 321. NADP(+) is bound at residue arginine 413.

Belongs to the FMO family. FAD is required as a cofactor.

It carries out the reaction trimethylamine + NADPH + O2 = trimethylamine N-oxide + NADP(+) + H2O. Catalyzes the oxidation of trimethylamine (TMA) to produce trimethylamine N-oxide (TMAO). TMA is the best substrate, but the enzyme can also oxidize methimazole, indole and dimethylamine (DMA). This Roseovarius nubinhibens (strain ATCC BAA-591 / DSM 15170 / ISM) protein is Trimethylamine monooxygenase.